The sequence spans 607 residues: Elongation factor 4 (607 aa).

A tr-type G domain is found at 11–193 (GKIRNFSIIA…QIVEKVPAPT (183 aa)). Residues 23 to 28 (DHGKST) and 140 to 143 (NKID) each bind GTP.

This sequence belongs to the TRAFAC class translation factor GTPase superfamily. Classic translation factor GTPase family. LepA subfamily.

It localises to the cell membrane. It catalyses the reaction GTP + H2O = GDP + phosphate + H(+). Required for accurate and efficient protein synthesis under certain stress conditions. May act as a fidelity factor of the translation reaction, by catalyzing a one-codon backward translocation of tRNAs on improperly translocated ribosomes. Back-translocation proceeds from a post-translocation (POST) complex to a pre-translocation (PRE) complex, thus giving elongation factor G a second chance to translocate the tRNAs correctly. Binds to ribosomes in a GTP-dependent manner. The chain is Elongation factor 4 from Streptococcus pneumoniae (strain Taiwan19F-14).